Here is a 261-residue protein sequence, read N- to C-terminus: Sepiapterin reductase (261 aa).

Position 1 is an N-acetylmethionine (methionine 1). 14-20 is an NADP(+) binding site; the sequence is GASRGFG. A Phosphoserine modification is found at serine 32. Residues 42 to 43 and 69 to 70 contribute to the NADP(+) site; these read RN and DL. Serine 103 carries the phosphoserine modification. Residues 157–158 and tyrosine 170 contribute to the substrate site; that span reads SL. NADP(+) is bound at residue lysine 174. Glycine 199 serves as a coordination point for substrate. 201–206 contributes to the NADP(+) binding site; that stretch reads LDTDMQ. At serine 213 the chain carries Phosphoserine; by CaMK2; in vitro. Aspartate 257 serves as a coordination point for substrate.

This sequence belongs to the sepiapterin reductase family. Homodimer. In terms of processing, in vitro phosphorylation of Ser-213 by CaMK2 does not change kinetic parameters.

The protein resides in the cytoplasm. It carries out the reaction L-erythro-7,8-dihydrobiopterin + NADP(+) = L-sepiapterin + NADPH + H(+). It catalyses the reaction (6R)-L-erythro-5,6,7,8-tetrahydrobiopterin + 2 NADP(+) = 6-pyruvoyl-5,6,7,8-tetrahydropterin + 2 NADPH + 2 H(+). In terms of biological role, catalyzes the final one or two reductions in tetra-hydrobiopterin biosynthesis to form 5,6,7,8-tetrahydrobiopterin. This is Sepiapterin reductase (SPR) from Homo sapiens (Human).